The sequence spans 111 residues: UPF0235 protein glr3835 (111 aa).

The protein belongs to the UPF0235 family.

The chain is UPF0235 protein glr3835 from Gloeobacter violaceus (strain ATCC 29082 / PCC 7421).